The chain runs to 238 residues: Ribosome-recycling factor, mitochondrial (238 aa).

The protein belongs to the RRF family.

It is found in the mitochondrion. In terms of biological role, responsible for the release of ribosomes from messenger RNA at the termination of protein biosynthesis. May increase the efficiency of translation by recycling ribosomes from one round of translation to another. This Caenorhabditis elegans protein is Ribosome-recycling factor, mitochondrial.